The sequence spans 739 residues: NAD(P)H-quinone oxidoreductase subunit 5, chloroplastic (739 aa).

A run of 16 helical transmembrane segments spans residues 9-29, 39-59, 89-109, 125-145, 147-167, 185-205, 219-239, 258-278, 280-300, 327-347, 354-374, 396-416, 425-445, 542-562, 610-630, and 719-739; these read WVIP…LILI, IWAF…VQLS, IDPL…LVLI, FVYI…SNLI, IYFF…FWFT, GDFG…SLEF, NGIN…GAVA, TPIS…FLLA, LLPL…VGTI, LGYM…FHLI, ALLF…VGYS, TTFL…CFWS, WLYS…TAFY, LFPL…GISF, TLAI…YSFF, and ISSY…FFLS.

It belongs to the complex I subunit 5 family. NDH is composed of at least 16 different subunits, 5 of which are encoded in the nucleus.

The protein localises to the plastid. Its subcellular location is the chloroplast thylakoid membrane. The catalysed reaction is a plastoquinone + NADH + (n+1) H(+)(in) = a plastoquinol + NAD(+) + n H(+)(out). It carries out the reaction a plastoquinone + NADPH + (n+1) H(+)(in) = a plastoquinol + NADP(+) + n H(+)(out). NDH shuttles electrons from NAD(P)H:plastoquinone, via FMN and iron-sulfur (Fe-S) centers, to quinones in the photosynthetic chain and possibly in a chloroplast respiratory chain. The immediate electron acceptor for the enzyme in this species is believed to be plastoquinone. Couples the redox reaction to proton translocation, and thus conserves the redox energy in a proton gradient. This is NAD(P)H-quinone oxidoreductase subunit 5, chloroplastic (ndhF) from Hordeum vulgare (Barley).